A 175-amino-acid polypeptide reads, in one-letter code: Inorganic pyrophosphatase (175 aa).

Residues Lys30, Arg44, and Tyr56 each coordinate substrate. Mg(2+) contacts are provided by Asp66, Asp71, and Asp103. Tyr142 serves as a coordination point for substrate.

The protein belongs to the PPase family. As to quaternary structure, homohexamer. Mg(2+) is required as a cofactor.

Its subcellular location is the cytoplasm. The catalysed reaction is diphosphate + H2O = 2 phosphate + H(+). Its function is as follows. Catalyzes the hydrolysis of inorganic pyrophosphate (PPi) forming two phosphate ions. This is Inorganic pyrophosphatase from Haemophilus ducreyi (strain 35000HP / ATCC 700724).